The chain runs to 941 residues: Translation initiation factor IF-2 (941 aa).

2 disordered regions span residues 61 to 204 and 249 to 274; these read IQSN…RREN and QEKD…KNNK. Residues 147–163 show a composition bias toward basic and acidic residues; the sequence is EKAKQKLQEIQKSREAL. Residues 164-179 show a composition bias toward low complexity; the sequence is NKLTQSNTNNANNANS. Positions 180 to 204 are enriched in basic and acidic residues; that stretch reads AKKEISEVAKQEREQEHLDNKRREN. The tr-type G domain maps to 440-609; that stretch reads ERPPVVTIMG…LIQADIMELK (170 aa). The interval 449–456 is G1; it reads GHVDHGKT. Position 449–456 (449–456) interacts with GTP; that stretch reads GHVDHGKT. Positions 474 to 478 are G2; sequence GITQH. The G3 stretch occupies residues 495-498; sequence DTPG. GTP contacts are provided by residues 495-499 and 549-552; these read DTPGH and NKMD. The G4 stretch occupies residues 549–552; the sequence is NKMD. Positions 585–587 are G5; sequence SAK.

It belongs to the TRAFAC class translation factor GTPase superfamily. Classic translation factor GTPase family. IF-2 subfamily.

It localises to the cytoplasm. One of the essential components for the initiation of protein synthesis. Protects formylmethionyl-tRNA from spontaneous hydrolysis and promotes its binding to the 30S ribosomal subunits. Also involved in the hydrolysis of GTP during the formation of the 70S ribosomal complex. This is Translation initiation factor IF-2 from Helicobacter acinonychis (strain Sheeba).